Here is a 137-residue protein sequence, read N- to C-terminus: Large ribosomal subunit protein uL16 (137 aa).

This sequence belongs to the universal ribosomal protein uL16 family. As to quaternary structure, part of the 50S ribosomal subunit.

Its function is as follows. Binds 23S rRNA and is also seen to make contacts with the A and possibly P site tRNAs. The sequence is that of Large ribosomal subunit protein uL16 from Lawsonia intracellularis (strain PHE/MN1-00).